Here is a 287-residue protein sequence, read N- to C-terminus: Protein UL24 homolog (287 aa).

2 disordered regions span residues 1–33 and 254–287; these read MARR…FSRR and RVGK…DSNL. Positions 16–33 are enriched in basic residues; it reads HRSRTRSKTAHHRKFSRR.

It belongs to the herpesviridae UL24 family.

It is found in the virion. It localises to the host cytoplasm. The protein resides in the host nucleus. The protein localises to the host nucleolus. Its subcellular location is the host Golgi apparatus. May participate in nuclear egress of viral particles. Plays a role in the dispersal of several host nucleolar proteins including NCL/nucleolin and NPM1. Since deletion of host NCL/nucleolin negatively impact on nuclear egress, UL24 supposedly acts on this process through its effect on host nucleoli. This Infectious laryngotracheitis virus (strain Thorne V882) (ILTV) protein is Protein UL24 homolog.